The following is a 237-amino-acid chain: Phosphoribosylaminoimidazole-succinocarboxamide synthase (237 aa).

It belongs to the SAICAR synthetase family.

The enzyme catalyses 5-amino-1-(5-phospho-D-ribosyl)imidazole-4-carboxylate + L-aspartate + ATP = (2S)-2-[5-amino-1-(5-phospho-beta-D-ribosyl)imidazole-4-carboxamido]succinate + ADP + phosphate + 2 H(+). It functions in the pathway purine metabolism; IMP biosynthesis via de novo pathway; 5-amino-1-(5-phospho-D-ribosyl)imidazole-4-carboxamide from 5-amino-1-(5-phospho-D-ribosyl)imidazole-4-carboxylate: step 1/2. In Deinococcus radiodurans (strain ATCC 13939 / DSM 20539 / JCM 16871 / CCUG 27074 / LMG 4051 / NBRC 15346 / NCIMB 9279 / VKM B-1422 / R1), this protein is Phosphoribosylaminoimidazole-succinocarboxamide synthase.